Consider the following 349-residue polypeptide: Small ribosomal subunit biogenesis GTPase RsgA (349 aa).

Residues 1–11 (MSKKKLSKGQQ) show a composition bias toward basic residues. Residues 1-35 (MSKKKLSKGQQRRVSANHQRRLKHADSKVEWDDSQ) form a disordered region. In terms of domain architecture, CP-type G spans 111 to 272 (YDGLKPIAAN…VIDSPGVREF (162 aa)). Residues 158–161 (NKID) and 212–220 (GQSGVGKSS) each bind GTP. Cysteine 296, cysteine 301, histidine 303, and cysteine 309 together coordinate Zn(2+).

This sequence belongs to the TRAFAC class YlqF/YawG GTPase family. RsgA subfamily. Monomer. Associates with 30S ribosomal subunit, binds 16S rRNA. Zn(2+) serves as cofactor.

It is found in the cytoplasm. Functionally, one of several proteins that assist in the late maturation steps of the functional core of the 30S ribosomal subunit. Helps release RbfA from mature subunits. May play a role in the assembly of ribosomal proteins into the subunit. Circularly permuted GTPase that catalyzes slow GTP hydrolysis, GTPase activity is stimulated by the 30S ribosomal subunit. The chain is Small ribosomal subunit biogenesis GTPase RsgA from Dickeya dadantii (strain 3937) (Erwinia chrysanthemi (strain 3937)).